Here is a 631-residue protein sequence, read N- to C-terminus: Guanylate-binding protein 4 (631 aa).

A GB1/RHD3-type G domain is found at 33–283; sequence SQPVVVVAIV…FASYIFTYAK (251 aa). GTP-binding positions include 43 to 50 and 103 to 107; these read GWSHTGKS and DTEGL. Positions 492–592 form a coiled coil; it reads IAEKHTKKEA…GHNIKEMKQN (101 aa).

The protein belongs to the TRAFAC class dynamin-like GTPase superfamily. GB1/RHD3 GTPase family. GB1 subfamily. In terms of assembly, heterodimer with other family members, including GBP1, GBP2 and GBP5. Dimerization regulates subcellular location. Interacts with IRF7; preventing interaction between TRAF6 and IRF7, resulting in impaired TRAF6-mediated IRF7 ubiquitination. As to expression, mainly expressed in organs of the immune system, such as spleen and lymph nodes.

The protein localises to the golgi apparatus membrane. The protein resides in the cytoplasm. It localises to the nucleus. Its subcellular location is the perinuclear region. The enzyme catalyses GTP + H2O = GDP + phosphate + H(+). Its function is as follows. Interferon (IFN)-inducible GTPase that plays important roles in innate immunity against a diverse range of bacterial, viral and protozoan pathogens. Negatively regulates the antiviral response by inhibiting activation of IRF7 transcription factor. The sequence is that of Guanylate-binding protein 4 from Mus musculus (Mouse).